The chain runs to 202 residues: Holliday junction resolvase RecU (202 aa).

The Mg(2+) site is built by threonine 85, aspartate 87, glutamate 100, and glutamine 119.

This sequence belongs to the RecU family. The cofactor is Mg(2+).

The protein resides in the cytoplasm. It catalyses the reaction Endonucleolytic cleavage at a junction such as a reciprocal single-stranded crossover between two homologous DNA duplexes (Holliday junction).. Functionally, endonuclease that resolves Holliday junction intermediates in genetic recombination. Cleaves mobile four-strand junctions by introducing symmetrical nicks in paired strands. Promotes annealing of linear ssDNA with homologous dsDNA. Required for DNA repair, homologous recombination and chromosome segregation. This Streptococcus uberis (strain ATCC BAA-854 / 0140J) protein is Holliday junction resolvase RecU.